The following is a 208-amino-acid chain: Ribosomal RNA large subunit methyltransferase E (208 aa).

5 residues coordinate S-adenosyl-L-methionine: G63, W65, D83, D99, and D124. K164 functions as the Proton acceptor in the catalytic mechanism.

It belongs to the class I-like SAM-binding methyltransferase superfamily. RNA methyltransferase RlmE family.

It localises to the cytoplasm. It catalyses the reaction uridine(2552) in 23S rRNA + S-adenosyl-L-methionine = 2'-O-methyluridine(2552) in 23S rRNA + S-adenosyl-L-homocysteine + H(+). Its function is as follows. Specifically methylates the uridine in position 2552 of 23S rRNA at the 2'-O position of the ribose in the fully assembled 50S ribosomal subunit. This chain is Ribosomal RNA large subunit methyltransferase E, found in Enterobacter sp. (strain 638).